The chain runs to 377 residues: Compound eye opsin BCRH1 (377 aa).

Residues 1–53 (MANVTGPQMAFYGSGAATFGYPEGMTVADFVPDRVKHMVLDHWYNYPPVNPMW) are Extracellular-facing. N3 carries N-linked (GlcNAc...) asparagine glycosylation. Residues 54–78 (HYLLGVVYLFLGVISIAGNGLVIYL) traverse the membrane as a helical segment. Residues 79-90 (YMKSQALKTPAN) are Cytoplasmic-facing. A helical transmembrane segment spans residues 91 to 115 (MLIVNLALSDLIMLTTNFPPFCYNC). Residues 116–131 (FSGGRWMFSGTYCEIY) lie on the Extracellular side of the membrane. The cysteines at positions 128 and 205 are disulfide-linked. The helical transmembrane segment at 132–151 (AALGAITGVCSIWTLCMISF) threads the bilayer. The Cytoplasmic segment spans residues 152 to 170 (DRYNIICNGFNGPKLTQGK). The helical transmembrane segment at 171–194 (ATFMCGLAWVISVGWSLPPFFGWG) threads the bilayer. The Extracellular portion of the chain corresponds to 195-218 (SYTLEGILDSCSYDYFTRDMNTIT). Residues 219 to 246 (YNICIFIFDFFLPASVIVFSYVFIVKAI) traverse the membrane as a helical segment. Residues 247-281 (FAHEAAMRAQAKKMNVTNLRSNEAETQRAEIRIAK) are Cytoplasmic-facing. Residues 282–305 (TALVNVSLWFICWTPYAAITIQGL) form a helical membrane-spanning segment. Residues 306-313 (LGNAEGIT) are Extracellular-facing. The chain crosses the membrane as a helical span at residues 314-338 (PLLTTLPALLAKSCSCYNPFVYAIS). K325 carries the N6-(retinylidene)lysine modification. Over 339–377 (HPKFRLAITQHLPWFCVHEKDPNDVEENQSSNTQTQEKS) the chain is Cytoplasmic.

It belongs to the G-protein coupled receptor 1 family. Opsin subfamily. In terms of processing, phosphorylated on some or all of the serine and threonine residues present in the C-terminal region. Expressed in all of the seven retinular cells (R1-R7) forming the main rhabdom in each ommatidium.

It localises to the membrane. Visual pigments are the light-absorbing molecules that mediate vision. They consist of an apoprotein, opsin, covalently linked to cis-retinal. This opsin produces visual pigments with maximal absorption in the blue-green region of the spectrum. In Hemigrapsus sanguineus (Asian shore crab), this protein is Compound eye opsin BCRH1.